The primary structure comprises 318 residues: Acetyl-coenzyme A carboxylase carboxyl transferase subunit alpha (318 aa).

Residues 32–293 (DLSQEIESLE…KKALQKHLGE (262 aa)) enclose the CoA carboxyltransferase C-terminal domain.

This sequence belongs to the AccA family. Acetyl-CoA carboxylase is a heterohexamer composed of biotin carboxyl carrier protein (AccB), biotin carboxylase (AccC) and two subunits each of ACCase subunit alpha (AccA) and ACCase subunit beta (AccD).

Its subcellular location is the cytoplasm. It catalyses the reaction N(6)-carboxybiotinyl-L-lysyl-[protein] + acetyl-CoA = N(6)-biotinyl-L-lysyl-[protein] + malonyl-CoA. It functions in the pathway lipid metabolism; malonyl-CoA biosynthesis; malonyl-CoA from acetyl-CoA: step 1/1. Its function is as follows. Component of the acetyl coenzyme A carboxylase (ACC) complex. First, biotin carboxylase catalyzes the carboxylation of biotin on its carrier protein (BCCP) and then the CO(2) group is transferred by the carboxyltransferase to acetyl-CoA to form malonyl-CoA. This Syntrophomonas wolfei subsp. wolfei (strain DSM 2245B / Goettingen) protein is Acetyl-coenzyme A carboxylase carboxyl transferase subunit alpha.